A 186-amino-acid chain; its full sequence is Translation initiation factor IF-3 (186 aa).

Belongs to the IF-3 family. As to quaternary structure, monomer.

It localises to the cytoplasm. Functionally, IF-3 binds to the 30S ribosomal subunit and shifts the equilibrium between 70S ribosomes and their 50S and 30S subunits in favor of the free subunits, thus enhancing the availability of 30S subunits on which protein synthesis initiation begins. The sequence is that of Translation initiation factor IF-3 from Chlamydia caviae (strain ATCC VR-813 / DSM 19441 / 03DC25 / GPIC) (Chlamydophila caviae).